A 425-amino-acid chain; its full sequence is Alpha-N-acetylgalactosaminidase (425 aa).

NAD(+) is bound by residues 29–30, glutamate 51, 99–102, 119–120, and asparagine 148; these read NR, WLTH, and EV. A substrate-binding site is contributed by tyrosine 177. NAD(+) contacts are provided by residues 194 to 198 and tyrosine 211; that span reads FHNHW. Substrate contacts are provided by residues 211–214 and tyrosine 293; that span reads YPTH.

It belongs to the Gfo/Idh/MocA family. Glycosyl hydrolase 109 subfamily. NAD(+) serves as cofactor.

The enzyme catalyses Cleavage of non-reducing alpha-(1-&gt;3)-N-acetylgalactosamine residues from human blood group A and AB mucin glycoproteins, Forssman hapten and blood group A lacto series glycolipids.. Its function is as follows. Glycosidase that has specific alpha-N-acetylgalactosaminidase activity. This is Alpha-N-acetylgalactosaminidase from Bacteroides fragilis (strain ATCC 25285 / DSM 2151 / CCUG 4856 / JCM 11019 / LMG 10263 / NCTC 9343 / Onslow / VPI 2553 / EN-2).